The sequence spans 322 residues: UDP-N-acetylenolpyruvoylglucosamine reductase (322 aa).

The FAD-binding PCMH-type domain occupies 36-202; that stretch reads RAGGPAQVLF…TSVLFEGVPG (167 aa). Arginine 182 is an active-site residue. Serine 231 serves as the catalytic Proton donor. Glutamate 301 is a catalytic residue.

Belongs to the MurB family. Requires FAD as cofactor.

Its subcellular location is the cytoplasm. It carries out the reaction UDP-N-acetyl-alpha-D-muramate + NADP(+) = UDP-N-acetyl-3-O-(1-carboxyvinyl)-alpha-D-glucosamine + NADPH + H(+). It participates in cell wall biogenesis; peptidoglycan biosynthesis. In terms of biological role, cell wall formation. In Brucella canis (strain ATCC 23365 / NCTC 10854 / RM-666), this protein is UDP-N-acetylenolpyruvoylglucosamine reductase.